A 213-amino-acid chain; its full sequence is MVFRRFVEVGRVAYVSFGPHAGKLVAIVDVIDQNRALVDGPCTQVRRQAMPFKCMQLTDFILKFPHSARQKYVRKAWEKADINAKWAATRWAKKIEAREKKAKMTDFDRYKVMKARKMRNRLIKLEVKKLQKAALLKASPKKALAKGAAAAAAAAAAKVPVKKITTAGKKAPAQKAPAQKAAGQKAAPPPKAQKVQKPPAQKAPAPKASGEKA.

N6-acetyllysine is present on Lys-79. Position 85 is an N6-acetyllysine; alternate (Lys-85). Residue Lys-85 is modified to N6-succinyllysine; alternate. A Glycyl lysine isopeptide (Lys-Gly) (interchain with G-Cter in SUMO2) cross-link involves residue Lys-124. Ser-139 is subject to Phosphoserine. The disordered stretch occupies residues 166 to 213 (TAGKKAPAQKAPAQKAAGQKAAPPPKAQKVQKPPAQKAPAPKASGEKA). Residues 169–173 (KKAPA) form a 1-1; approximate repeat. A 4 X 5 AA tandem repeats of Q-K-A-[APS]-X region spans residues 169 to 188 (KKAPAQKAPAQKAAGQKAAP). Tandem repeats lie at residues 174–178 (QKAPA), 179–183 (QKAAG), 184–188 (QKAAP), 191–193 (KAQ), and 194–196 (KVQ). The segment at 191 to 196 (KAQKVQ) is 2 X 3 AA tandem repeats of K-G-Q. Lys-202 carries the N6-succinyllysine modification.

It belongs to the eukaryotic ribosomal protein eL14 family. As to quaternary structure, component of the large ribosomal subunit.

The protein localises to the cytoplasm. Component of the large ribosomal subunit. The ribosome is a large ribonucleoprotein complex responsible for the synthesis of proteins in the cell. This chain is Large ribosomal subunit protein eL14 (RPL14), found in Sus scrofa (Pig).